The primary structure comprises 328 residues: Sterol-4-alpha-carboxylate 3-dehydrogenase, decarboxylating (328 aa).

The active-site Proton acceptor is the Tyr-145. Position 149 (Lys-149) interacts with NAD(+). A helical membrane pass occupies residues 259 to 279 (LHMVLPTPIALSLVWIMALIW).

It belongs to the 3-beta-HSD family. In terms of assembly, homodimer.

The protein resides in the endoplasmic reticulum membrane. The protein localises to the lipid droplet. It catalyses the reaction a 3beta-hydroxysteroid-4alpha-carboxylate + NADP(+) = a 3-oxosteroid + CO2 + NADPH. The enzyme catalyses a 3beta-hydroxysteroid-4alpha-carboxylate + NAD(+) = a 3-oxosteroid + CO2 + NADH. Its pathway is steroid biosynthesis; zymosterol biosynthesis; zymosterol from lanosterol: step 4/6. In terms of biological role, catalyzes the NAD(P)(+)-dependent oxidative decarboxylation of the C4 methyl groups of 4-alpha-carboxysterols in post-squalene cholesterol biosynthesis. The sequence is that of Sterol-4-alpha-carboxylate 3-dehydrogenase, decarboxylating (nsdhl) from Dictyostelium discoideum (Social amoeba).